A 418-amino-acid polypeptide reads, in one-letter code: NADH-quinone oxidoreductase subunit D (418 aa).

Belongs to the complex I 49 kDa subunit family. NDH-1 is composed of 14 different subunits. Subunits NuoB, C, D, E, F, and G constitute the peripheral sector of the complex.

It localises to the cell inner membrane. It catalyses the reaction a quinone + NADH + 5 H(+)(in) = a quinol + NAD(+) + 4 H(+)(out). Its function is as follows. NDH-1 shuttles electrons from NADH, via FMN and iron-sulfur (Fe-S) centers, to quinones in the respiratory chain. The immediate electron acceptor for the enzyme in this species is believed to be ubiquinone. Couples the redox reaction to proton translocation (for every two electrons transferred, four hydrogen ions are translocated across the cytoplasmic membrane), and thus conserves the redox energy in a proton gradient. In Bordetella avium (strain 197N), this protein is NADH-quinone oxidoreductase subunit D.